The following is a 322-amino-acid chain: Pantothenate kinase (322 aa).

Residue 101–108 (GSVAVGKS) coordinates ATP.

It belongs to the prokaryotic pantothenate kinase family.

The protein resides in the cytoplasm. It carries out the reaction (R)-pantothenate + ATP = (R)-4'-phosphopantothenate + ADP + H(+). The protein operates within cofactor biosynthesis; coenzyme A biosynthesis; CoA from (R)-pantothenate: step 1/5. The sequence is that of Pantothenate kinase from Psychromonas ingrahamii (strain DSM 17664 / CCUG 51855 / 37).